We begin with the raw amino-acid sequence, 339 residues long: Ketol-acid reductoisomerase (NADP(+)) (339 aa).

The KARI N-terminal Rossmann domain occupies M1–T182. NADP(+) is bound by residues Y24 to Q27, R48, S51, T53, and D83 to Q86. Residue H108 is part of the active site. Residue G134 coordinates NADP(+). The KARI C-terminal knotted domain occupies T183–I328. Positions 191, 195, 227, and 231 each coordinate Mg(2+). S252 contacts substrate.

Belongs to the ketol-acid reductoisomerase family. It depends on Mg(2+) as a cofactor.

It catalyses the reaction (2R)-2,3-dihydroxy-3-methylbutanoate + NADP(+) = (2S)-2-acetolactate + NADPH + H(+). It carries out the reaction (2R,3R)-2,3-dihydroxy-3-methylpentanoate + NADP(+) = (S)-2-ethyl-2-hydroxy-3-oxobutanoate + NADPH + H(+). It functions in the pathway amino-acid biosynthesis; L-isoleucine biosynthesis; L-isoleucine from 2-oxobutanoate: step 2/4. It participates in amino-acid biosynthesis; L-valine biosynthesis; L-valine from pyruvate: step 2/4. Its function is as follows. Involved in the biosynthesis of branched-chain amino acids (BCAA). Catalyzes an alkyl-migration followed by a ketol-acid reduction of (S)-2-acetolactate (S2AL) to yield (R)-2,3-dihydroxy-isovalerate. In the isomerase reaction, S2AL is rearranged via a Mg-dependent methyl migration to produce 3-hydroxy-3-methyl-2-ketobutyrate (HMKB). In the reductase reaction, this 2-ketoacid undergoes a metal-dependent reduction by NADPH to yield (R)-2,3-dihydroxy-isovalerate. The sequence is that of Ketol-acid reductoisomerase (NADP(+)) from Brucella anthropi (strain ATCC 49188 / DSM 6882 / CCUG 24695 / JCM 21032 / LMG 3331 / NBRC 15819 / NCTC 12168 / Alc 37) (Ochrobactrum anthropi).